We begin with the raw amino-acid sequence, 1832 residues long: Multifunctional protein pyr-3 (1832 aa).

Residues 2–400 (AATVYRPATA…PGPRDTEFLF (399 aa)) form a GATase (Glutamine amidotransferase) region. Residues serine 64, glycine 273, and glycine 275 each coordinate L-glutamine. Positions 228–413 (RILCLDVGMK…IQTVAKCTTD (186 aa)) constitute a Glutamine amidotransferase type-1 domain. Residue cysteine 302 is the Nucleophile; for GATase activity of the active site. The L-glutamine site is built by leucine 303, glutamine 306, asparagine 344, glycine 346, and tyrosine 347. Catalysis depends on for GATase activity residues histidine 386 and glutamate 388. Positions 401–442 (DVFIQTVAKCTTDNTLLQKGVEFPGGTTEENERLHPRVDVKK) are linker. Residues 443 to 983 (VLVLGSGGLS…SEHDVSFEDR (541 aa)) form a CPSase A region. The CPSase (Carbamoyl phosphate synthase) stretch occupies residues 443–1484 (VLVLGSGGLS…TNVKNAKILV (1042 aa)). Residues arginine 560, arginine 600, glycine 606, glycine 607, arginine 637, methionine 639, glutamate 644, glycine 670, isoleucine 671, histidine 672, glutamine 713, and glutamate 727 each coordinate ATP. 2 ATP-grasp domains span residues 564–756 (ARSM…KLGL) and 1102–1293 (SRML…KAIM). Positions 713, 727, and 729 each coordinate Mg(2+). Glutamine 713, glutamate 727, and asparagine 729 together coordinate Mn(2+). Residues 984 to 1484 (GVMVLGSGVY…TNVKNAKILV (501 aa)) form a CPSase B region. The ATP site is built by arginine 1138, lysine 1177, isoleucine 1179, glutamate 1184, glycine 1209, valine 1210, histidine 1211, serine 1212, glutamine 1252, and glutamate 1264. 3 residues coordinate Mg(2+): glutamine 1252, glutamate 1264, and asparagine 1266. 3 residues coordinate Mn(2+): glutamine 1252, glutamate 1264, and asparagine 1266. Positions 1359 to 1507 (FKVPKKNILL…RDYQTSHTPL (149 aa)) constitute an MGS-like domain. Residues 1485 to 1528 (EAIARYRDMEIGERDYQTSHTPLQLSGQVNFTLQDSLSRPHSFK) form a linker region. Residues 1529-1832 (KAHVLSVEQY…MALLALVMSG (304 aa)) form an ATCase (Aspartate transcarbamylase) region. Carbamoyl phosphate-binding residues include arginine 1581 and threonine 1582. Lysine 1609 is a binding site for L-aspartate. Arginine 1630, histidine 1658, and glutamine 1661 together coordinate carbamoyl phosphate. Arginine 1691 and arginine 1754 together coordinate L-aspartate. Residues leucine 1793 and proline 1794 each contribute to the carbamoyl phosphate site.

In the N-terminal section; belongs to the CarA family. It in the central section; belongs to the CarB family. This sequence in the C-terminal section; belongs to the aspartate/ornithine carbamoyltransferase superfamily. ATCase family. Mg(2+) serves as cofactor. Requires Mn(2+) as cofactor.

It is found in the cytoplasm. The protein localises to the nucleus. It catalyses the reaction hydrogencarbonate + L-glutamine + 2 ATP + H2O = carbamoyl phosphate + L-glutamate + 2 ADP + phosphate + 2 H(+). It carries out the reaction L-glutamine + H2O = L-glutamate + NH4(+). The catalysed reaction is hydrogencarbonate + NH4(+) + 2 ATP = carbamoyl phosphate + 2 ADP + phosphate + 2 H(+). The enzyme catalyses carbamoyl phosphate + L-aspartate = N-carbamoyl-L-aspartate + phosphate + H(+). It participates in pyrimidine metabolism; UMP biosynthesis via de novo pathway; (S)-dihydroorotate from bicarbonate: step 1/3. Its pathway is pyrimidine metabolism; UMP biosynthesis via de novo pathway; (S)-dihydroorotate from bicarbonate: step 2/3. Both CPSase and ATCase activities are feedback inhibited by the end product UTP. In terms of biological role, multifunctional protein that encodes the first 2 enzymatic activities of the de novo pyrimidine pathway: carbamoylphosphate synthetase (CPSase; EC 6.3.5.5) and aspartate transcarbamylase (ATCase; EC 2.1.3.2). The CPSase-function is accomplished in 2 steps, by a glutamine-dependent amidotransferase activity (GATase) that binds and cleaves glutamine to produce ammonia, followed by an ammonium-dependent carbamoyl phosphate synthetase, which reacts with the ammonia, hydrogencarbonate and ATP to form carbamoyl phosphate. The endogenously produced carbamoyl phosphate is sequestered and channeled to the ATCase active site. ATCase then catalyzes the formation of carbamoyl-L-aspartate from L-aspartate and carbamoyl phosphate. The protein is Multifunctional protein pyr-3 (pyr-3) of Neurospora crassa (strain ATCC 24698 / 74-OR23-1A / CBS 708.71 / DSM 1257 / FGSC 987).